We begin with the raw amino-acid sequence, 261 residues long: 14-3-3-like protein A (261 aa).

Belongs to the 14-3-3 family.

The protein is 14-3-3-like protein A of Vicia faba (Broad bean).